The following is a 222-amino-acid chain: Charged multivesicular body protein 4b (222 aa).

Disordered regions lie at residues 1–21 (MSLI…PSPQ) and 183–222 (GPET…WATA). The stretch at 21–182 (QEAIQKLRDT…ELDKNLLEVQ (162 aa)) forms a coiled coil. Low complexity predominate over residues 188–200 (PLPNVPAAVLPAK).

Belongs to the SNF7 family. Probable core component of the endosomal sorting required for transport complex III (ESCRT-III). ESCRT-III components are thought to multimerize to form a flat lattice on the perimeter membrane of the endosome.

It is found in the cytoplasm. It localises to the cytosol. Its subcellular location is the late endosome membrane. The protein resides in the midbody. Its function is as follows. Probable core component of the endosomal sorting required for transport complex III (ESCRT-III) which is involved in multivesicular bodies (MVBs) formation and sorting of endosomal cargo proteins into MVBs. MVBs contain intraluminal vesicles (ILVs) that are generated by invagination and scission from the limiting membrane of the endosome and mostly are delivered to lysosomes enabling degradation of membrane proteins, such as stimulated growth factor receptors, lysosomal enzymes and lipids. In Xenopus tropicalis (Western clawed frog), this protein is Charged multivesicular body protein 4b (chmp4b).